Reading from the N-terminus, the 1028-residue chain is Sodium/potassium-transporting ATPase subunit alpha-4 (1028 aa).

Residues 1-36 are disordered; that stretch reads MEPGKETAATSEQKPRPTLRASNTNRQPKVKRRKKD. The Cytoplasmic portion of the chain corresponds to 1–92; the sequence is MEPGKETAAT…NVLTPPPTTP (92 aa). Residues 87–89 form an interaction with phosphoinositide-3 kinase region; sequence PPP. The helical transmembrane segment at 93-113 threads the bilayer; the sequence is EWIKFCKQLFGGFSLLLWTGS. Topologically, residues 114–137 are extracellular; that stretch reads LLCFLAYGIHVSYYQENANKDNLY. The helical transmembrane segment at 138–158 threads the bilayer; sequence LGIVLSAVVIITGCFSYYQEA. Residues 159 to 294 are Cytoplasmic-facing; it reads KSSKIMESFK…MGKTPIATEI (136 aa). Residues 295–314 traverse the membrane as a helical segment; the sequence is EHFIHIITAVAVFLGVTFFF. The Extracellular portion of the chain corresponds to 315–326; the sequence is LSLILGYTWLDA. The chain crosses the membrane as a helical span at residues 327 to 344; it reads VIFLIGIIVANVPEGLLA. At 345–777 the chain is on the cytoplasmic side; that stretch reads TVTVCLTLTA…EEGRLIFDNL (433 aa). Residue Asp-382 is the 4-aspartylphosphate intermediate of the active site. The Mg(2+) site is built by Asp-722 and Asp-726. Residues 778-797 traverse the membrane as a helical segment; that stretch reads KKSIAYTLTSNIPEITPFLL. Over 798–807 the chain is Extracellular; the sequence is FIVLSIPLPL. The chain crosses the membrane as a helical span at residues 808 to 828; sequence GTITILCIDLGTDMVPAISLA. Topologically, residues 829–848 are cytoplasmic; the sequence is YETPESDIMKRLPRNPKTDN. A helical membrane pass occupies residues 849 to 871; it reads LVNDRLIGMAYGQIGMIQALAGF. The Extracellular portion of the chain corresponds to 872-923; sequence FTYFVILAENGFKPLDLLGIRLYWDDTNLNDLEDTYGQQWTYEQRKVVEFTC. Residues 924 to 943 traverse the membrane as a helical segment; it reads QTAFFISIVIVQWADLIICK. The Cytoplasmic portion of the chain corresponds to 944–956; the sequence is TRRNSLFKQGMKN. Ser-948 bears the Phosphoserine; by PKA mark. Residues 957–975 form a helical membrane-spanning segment; sequence KVLIFGLLEETILAACLSY. Over 976–990 the chain is Extracellular; the sequence is IPGMDVALRMYPLKI. The helical transmembrane segment at 991-1011 threads the bilayer; sequence NWWFCALPYSVLIFIYDEVRK. The Cytoplasmic segment spans residues 1012–1028; sequence LIIRRRPGGWLEKETYY.

The protein belongs to the cation transport ATPase (P-type) (TC 3.A.3) family. Type IIC subfamily. As to quaternary structure, the sodium/potassium-transporting ATPase is composed of a catalytic alpha subunit, an auxiliary non-catalytic beta subunit and an additional regulatory subunit.

The protein resides in the cell membrane. It catalyses the reaction K(+)(out) + Na(+)(in) + ATP + H2O = K(+)(in) + Na(+)(out) + ADP + phosphate + H(+). Specifically inhibited by an endogenous cardiac glycoside, ouabain. This is the catalytic component of the active enzyme, which catalyzes the hydrolysis of ATP coupled with the exchange of sodium and potassium ions across the plasma membrane. This action creates the electrochemical gradient of sodium and potassium ions, providing the energy for active transport of various nutrients. Plays a role in sperm motility. This Rattus norvegicus (Rat) protein is Sodium/potassium-transporting ATPase subunit alpha-4 (Atp1a4).